The chain runs to 631 residues: ATP-dependent protease PrkA (631 aa).

Phosphothreonine is present on T217. Residue S219 is modified to Phosphoserine.

Belongs to the PrkA family. Phosphorylated by PrkC on two sites, Thr-217 and Ser-219, with the threonine being the major site of modification.

Its subcellular location is the forespore. The protein resides in the spore coat. The catalysed reaction is Hydrolysis of proteins in presence of ATP.. With respect to regulation, hydrolase activity is regulated by phosphorylation by the Ser/Thr kinase PrkC, probably allowing fine control of sporulation. Phosphorylation by PrkC does not prevent ATP fixation but it inhibits specifically PrkA protease activity and down-regulates the sporulation processes. Hydrolase activity is inhibited by a protease inhibitor, phenylmethylsulfonyl fluoride (PMSF). Potential kinase activity requires the presence of MgCl(2) and is inhibited in the presence of MnCl(2). ATP-dependent protease that regulates sporulation. Is able to bind and hydrolyze ATP. This ATP-dependent protease activity is necessary for efficient sporulation of B.subtilis. In vitro, can hydrolyze alpha-casein, an exogenous substrate of Lon proteases, in an ATP-dependent manner. PrkA also modulates sporulation by negatively regulating the transcriptional regulator Hpr/ScoC to induce the expression of sigK. The control of sporulation mediated via the Hpr/ScoC regulator is probably indirect. PrkA was originally thought to be a protein kinase, as it has been shown to phosphorylate in vitro an unidentified 60 kDa protein from B.subtilis crude extracts at a serine residue. However, Zhang et al. did not observe autophosphorylation or kinase activity for this protein, suggesting that it may have lost its kinase activity during evolution or may be a pseudokinase. This chain is ATP-dependent protease PrkA, found in Bacillus subtilis (strain 168).